The sequence spans 257 residues: Nuclear receptor subfamily 0 group B member 2 (257 aa).

The region spanning 16 to 257 is the NR LBD domain; sequence SRPAILYALL…GLLGDMLLLR (242 aa). Symmetric dimethylarginine; by PRMT5 is present on R57.

The protein belongs to the nuclear hormone receptor family. NR0 subfamily. As to quaternary structure, interacts (via N-terminus) with NEUROD1 (via N-terminus and C-terminus). Interacts with ID2. Interacts with RORG, NFIL3, NR1D1 and BHLHE41. Heterodimer; efficient DNA binding requires dimerization with another bHLH protein. Interacts with RARA, RXRA, THRB, NR5A1, NR5A2, NR1I3, PPARA, PPARG and EID1. Interacts with HNF4A; the resulting heterodimer is transcriptionally inactive. Interacts with DDX3X; this interaction disrupts the interaction between HNF4 and NR0B2/SHP that forms inactive heterodimers and enhances the formation of active HNF4 homodimers. Arginine methylation by PRMT5 enhances repression activity of metabolic genes in liver in response to bile acid signaling, by increasing interaction with cofactors. In terms of tissue distribution, liver. Low levels of expression were detected in heart and pancreas.

It localises to the nucleus. The protein resides in the cytoplasm. Its function is as follows. Transcriptional regulator that acts as a negative regulator of receptor-dependent signaling pathways. Specifically inhibits transactivation of the nuclear receptor with which it interacts. Inhibits transcriptional activity of NEUROD1 on E-box-containing promoter by interfering with the coactivation function of the p300/CBP-mediated transcription complex for NEUROD1. Essential component of the liver circadian clock which via its interaction with NR1D1 and RORG regulates NPAS2-mediated hepatic lipid metabolism. Regulates the circadian expression of cytochrome P450 (CYP) enzymes. Represses: NR5A2 and HNF4A to down-regulate CYP2C38, NFLI3 to up-regulate CYP2A5, BHLHE41/HNF1A axis to up-regulate CYP1A2, CYP2E1 and CYP3A11, and NR1D1 to up-regulate CYP2B10, CYP4A10 and CYP4A14. The sequence is that of Nuclear receptor subfamily 0 group B member 2 (NR0B2) from Homo sapiens (Human).